Here is a 73-residue protein sequence, read N- to C-terminus: Cell division protein ZapB (73 aa).

Residues 3–66 adopt a coiled-coil conformation; it reads LELLSKLETK…SWNEKVTGLV (64 aa).

The protein belongs to the ZapB family. In terms of assembly, homodimer. The ends of the coiled-coil dimer bind to each other, forming polymers. Interacts with FtsZ.

It localises to the cytoplasm. Non-essential, abundant cell division factor that is required for proper Z-ring formation. It is recruited early to the divisome by direct interaction with FtsZ, stimulating Z-ring assembly and thereby promoting cell division earlier in the cell cycle. Its recruitment to the Z-ring requires functional FtsA or ZipA. This is Cell division protein ZapB from Shewanella baltica (strain OS223).